We begin with the raw amino-acid sequence, 858 residues long: Elongation factor 2 (858 aa).

Positions 17–362 (ANIRNMSVIA…MITIHLPSPV (346 aa)) constitute a tr-type G domain. Residue 26–33 (AHVDHGKS) participates in GTP binding. Threonine 54 carries the post-translational modification Phosphothreonine. Threonine 57 is subject to Phosphothreonine; by EEF2K. Threonine 59 carries the phosphothreonine modification. Lysine 152 is modified (N6-succinyllysine). GTP contacts are provided by residues 158–161 (NKMD) and 216–218 (SGL). At lysine 235 the chain carries N6-acetyllysine. Lysine 239 carries the post-translational modification N6-acetyllysine; alternate. Residue lysine 239 forms a Glycyl lysine isopeptide (Lys-Gly) (interchain with G-Cter in SUMO1); alternate linkage. Tyrosine 265 is subject to Phosphotyrosine; by CSK. At lysine 272 the chain carries N6-acetyllysine; alternate. Lysine 272 carries the post-translational modification N6-succinyllysine; alternate. Lysine 275 carries the N6-acetyllysine modification. Lysine 322 participates in a covalent cross-link: Glycyl lysine isopeptide (Lys-Gly) (interchain with G-Cter in SUMO). Serine 325 carries the phosphoserine modification. Position 373 is a phosphotyrosine; by CSK (tyrosine 373). Threonine 435 is modified (phosphothreonine). An N6-acetyllysine mark is found at lysine 439 and lysine 445. A Phosphoserine modification is found at serine 502. Lysine 525 carries the post-translational modification N6,N6,N6-trimethyllysine; by EEF2KMT. Lysine 529 participates in a covalent cross-link: Glycyl lysine isopeptide (Lys-Gly) (interchain with G-Cter in SUMO). N6-succinyllysine is present on lysine 572. Phosphoserine; by CDK2 is present on serine 595. Lysine 619 bears the N6-acetyllysine mark. Residue histidine 715 is modified to Diphthamide.

It belongs to the TRAFAC class translation factor GTPase superfamily. Classic translation factor GTPase family. EF-G/EF-2 subfamily. In terms of assembly, binds to 80S ribosomes. Actively translating ribosomes show mutually exclusive binding of eIF5a (EIF5A or EIF5A2) and EEF2/eEF2. Interacts with SERBP1; interaction sequesters EEF2/eEF2 at the A-site of the ribosome, thereby blocking the interaction sites of the mRNA-tRNA complex, promoting ribosome stabilization and hibernation. Interacts with HABP4; interaction takes place at the A-site of hibernating ribosomes and promotes ribosome stabilization. Component of the mRNA surveillance SURF complex, at least composed of ERF1, ERF3 (ERF3A or ERF3B), EEF2, UPF1/RENT1, SMG1, SMG8 and SMG9. Interacts with RBPMS2. Phosphorylation by EF-2 kinase completely inactivates EF-2; it requires prior phosphorylation by CDK2 at Ser-595 during mitotic prometaphase. Phosphorylation by CSK promotes SUMOylation, proteolytic cleavage, and nuclear translocation if the C-terminal fragment. Post-translationally, diphthamide is 2-[3-carboxyamido-3-(trimethyl-ammonio)propyl]histidine. In terms of processing, ISGylated. Proteolytically processed at two sites following phosphorylation by CSK. Post-translationally, SUMOylated following phosphorylation by CSK, promotes proteolytic cleavage.

The protein resides in the cytoplasm. It is found in the nucleus. The catalysed reaction is GTP + H2O = GDP + phosphate + H(+). Functionally, catalyzes the GTP-dependent ribosomal translocation step during translation elongation. During this step, the ribosome changes from the pre-translocational (PRE) to the post-translocational (POST) state as the newly formed A-site-bound peptidyl-tRNA and P-site-bound deacylated tRNA move to the P and E sites, respectively. Catalyzes the coordinated movement of the two tRNA molecules, the mRNA and conformational changes in the ribosome. This is Elongation factor 2 (EEF2) from Callithrix jacchus (White-tufted-ear marmoset).